Here is a 206-residue protein sequence, read N- to C-terminus: Ribosomal RNA small subunit methyltransferase G (206 aa).

S-adenosyl-L-methionine contacts are provided by residues Gly71, Phe76, 122 to 123 (AE), and Arg135.

Belongs to the methyltransferase superfamily. RNA methyltransferase RsmG family.

It is found in the cytoplasm. Specifically methylates the N7 position of a guanine in 16S rRNA. This is Ribosomal RNA small subunit methyltransferase G from Bacteroides thetaiotaomicron (strain ATCC 29148 / DSM 2079 / JCM 5827 / CCUG 10774 / NCTC 10582 / VPI-5482 / E50).